The sequence spans 465 residues: Cysteine--tRNA ligase (465 aa).

Cys-27 is a Zn(2+) binding site. The 'HIGH' region signature appears at 29–39 (PTVYDDAHLGH). Zn(2+)-binding residues include Cys-207, His-237, and Glu-241. The 'KMSKS' region signature appears at 269-273 (KMSKS). Lys-272 is a binding site for ATP.

Belongs to the class-I aminoacyl-tRNA synthetase family. Monomer. It depends on Zn(2+) as a cofactor.

The protein localises to the cytoplasm. It catalyses the reaction tRNA(Cys) + L-cysteine + ATP = L-cysteinyl-tRNA(Cys) + AMP + diphosphate. This chain is Cysteine--tRNA ligase (cysS), found in Helicobacter pylori (strain J99 / ATCC 700824) (Campylobacter pylori J99).